Reading from the N-terminus, the 780-residue chain is Translation initiation factor IF-2 (780 aa).

The disordered stretch occupies residues alanine 24–alanine 194. Polar residues-rich tracts occupy residues glutamate 59–valine 71 and glutamine 80–glutamine 90. Composition is skewed to low complexity over residues asparagine 98–asparagine 114 and asparagine 132–asparagine 158. Over residues arginine 159–glutamine 176 the composition is skewed to basic residues. The segment covering arginine 177–alanine 194 has biased composition (basic and acidic residues). The region spanning proline 281–lysine 450 is the tr-type G domain. The tract at residues glycine 290 to threonine 297 is G1. Glycine 290–threonine 297 lines the GTP pocket. The tract at residues glycine 315–alanine 319 is G2. The segment at aspartate 336–glycine 339 is G3. GTP-binding positions include aspartate 336 to histidine 340 and asparagine 390 to aspartate 393. A G4 region spans residues asparagine 390–aspartate 393. The segment at serine 426–lysine 428 is G5.

It belongs to the TRAFAC class translation factor GTPase superfamily. Classic translation factor GTPase family. IF-2 subfamily.

The protein resides in the cytoplasm. One of the essential components for the initiation of protein synthesis. Protects formylmethionyl-tRNA from spontaneous hydrolysis and promotes its binding to the 30S ribosomal subunits. Also involved in the hydrolysis of GTP during the formation of the 70S ribosomal complex. In Levilactobacillus brevis (strain ATCC 367 / BCRC 12310 / CIP 105137 / JCM 1170 / LMG 11437 / NCIMB 947 / NCTC 947) (Lactobacillus brevis), this protein is Translation initiation factor IF-2.